The chain runs to 43 residues: Protein PsbN (43 aa).

Residues 4–24 (ATIIVIFVSSLLLGITAYSIY) traverse the membrane as a helical segment.

This sequence belongs to the PsbN family.

The protein resides in the plastid. The protein localises to the chloroplast thylakoid membrane. May play a role in photosystem I and II biogenesis. The sequence is that of Protein PsbN from Trieres chinensis (Marine centric diatom).